An 84-amino-acid chain; its full sequence is Metallothionein type 2b (84 aa).

It belongs to the metallothionein superfamily. Type 15 family. Expressed in leaves, stems and roots.

The protein localises to the cytoplasm. Its subcellular location is the nucleus. Its function is as follows. Metallothioneins have a high content of cysteine residues that bind various heavy metals. Probably involved in maintaining homeostasis of essential transition metals and detoxification of toxic metals. Increases cadmium and zinc tolerance when expressed in heterologous systems. Metal chelator binding 6 cadmium or 5 zinc atoms per protein. The chain is Metallothionein type 2b from Colocasia esculenta (Wild taro).